The chain runs to 417 residues: Cotranscriptional regulator ARB2A (417 aa).

The signal sequence occupies residues 1-18; the sequence is MSISLSSLIFLPIWINMA. An N-linked (GlcNAc...) asparagine glycan is attached at N26. The disordered stretch occupies residues 208–248; that stretch reads KQKMHKQSSSSDGTDEPAGKRERRDKVSKETKKRRDFYEKY. Basic and acidic residues predominate over residues 224–237; the sequence is PAGKRERRDKVSKE. S294 serves as the catalytic Nucleophile. The interval 398 to 417 is disordered; it reads SSSQKPALTRRSHRIKHEEL. The segment covering 405–417 has biased composition (basic residues); it reads LTRRSHRIKHEEL. The short motif at 414–417 is the Prevents secretion from ER element; that stretch reads HEEL.

The protein belongs to the ARB2A family. As to quaternary structure, interacts with AGO2. Found in a complex, composed of AGO2, CHD7 and ARB2A.

It is found in the nucleus. Its subcellular location is the cytoplasm. The protein localises to the endoplasmic reticulum. Its function is as follows. Plays a role in the regulation of alternative splicing, by interacting with AGO2 and CHD7. Seems to be required for stabilizing protein-protein interactions at the chromatin-spliceosome interface. May have hydrolase activity. The chain is Cotranscriptional regulator ARB2A (Arb2a) from Mus musculus (Mouse).